The sequence spans 248 residues: Peroxisomal membrane protein 11A (248 aa).

The Cytoplasmic portion of the chain corresponds to 1 to 97 (MATKAPEKIT…RSSRWDSNHE (97 aa)). A helical membrane pass occupies residues 98–118 (LVLLIIAYGGEGLYYFVEQFI). The Lumenal segment spans residues 119–220 (WLTKSGLIDA…MTIADIRDGK (102 aa)). Residues 221–241 (GVLSAPNVISSAGLFSAIVST) traverse the membrane as a helical segment. At 242–248 (HKNWISC) the chain is on the cytoplasmic side.

Belongs to the peroxin-11 family. Homooligomer. Interacts with ARC5 and FIS1B on peroxisomes. Expressed in developing siliques.

The protein localises to the peroxisome membrane. Its function is as follows. Involved in peroxisomal proliferation. Promotes peroxisomal duplication, aggregation or elongation without fission. This chain is Peroxisomal membrane protein 11A (PEX11A), found in Arabidopsis thaliana (Mouse-ear cress).